A 227-amino-acid chain; its full sequence is uncharacterized protein (227 aa).

This is an uncharacterized protein from Ictalurid herpesvirus 1 (strain Auburn) (IcHV-1).